We begin with the raw amino-acid sequence, 122 residues long: Large ribosomal subunit protein uL29 (122 aa).

Serine 12 carries the post-translational modification Phosphoserine.

The protein belongs to the universal ribosomal protein uL29 family. In terms of assembly, component of the large ribosomal subunit (LSU). Mature yeast ribosomes consist of a small (40S) and a large (60S) subunit. The 40S small subunit contains 1 molecule of ribosomal RNA (18S rRNA) and at least 33 different proteins. The large 60S subunit contains 3 rRNA molecules (25S, 5.8S and 5S rRNA) and at least 46 different proteins. uL29 is associated with the polypeptide exit tunnel.

The protein localises to the cytoplasm. It localises to the nucleus. It is found in the nucleolus. Functionally, component of the ribosome, a large ribonucleoprotein complex responsible for the synthesis of proteins in the cell. The small ribosomal subunit (SSU) binds messenger RNAs (mRNAs) and translates the encoded message by selecting cognate aminoacyl-transfer RNA (tRNA) molecules. The large subunit (LSU) contains the ribosomal catalytic site termed the peptidyl transferase center (PTC), which catalyzes the formation of peptide bonds, thereby polymerizing the amino acids delivered by tRNAs into a polypeptide chain. The nascent polypeptides leave the ribosome through a tunnel in the LSU and interact with protein factors that function in enzymatic processing, targeting, and the membrane insertion of nascent chains at the exit of the ribosomal tunnel. The protein is Large ribosomal subunit protein uL29 (rpl35) of Schizosaccharomyces pombe (strain 972 / ATCC 24843) (Fission yeast).